The sequence spans 437 residues: La-related protein 7 homolog (437 aa).

The region spanning 38-145 (SKSPSLTIPK…KRKKKFDNRT (108 aa)) is the HTH La-type RNA-binding domain. The 119-residue stretch at 279–397 (ELSQSCFLKI…QRSSIDEIKA (119 aa)) folds into the xRRM domain. Residues 417–427 (RRPVSKRKNKA) are compositionally biased toward basic residues. The interval 417-437 (RRPVSKRKNKAINKMSTEVKK) is disordered.

Belongs to the LARP7 family. As to quaternary structure, component of the telomerase holoenzyme complex composed minimally of the catalytic subunit p123 and the telomerase RNA template component. In terms of processing, the mature form of the protein is a protein of 43 kDa, which is derived from a 51 kDa precursor by proteolytic cleavage.

The protein resides in the nucleus. Its subcellular location is the chromosome. It is found in the telomere. In terms of biological role, RNA-binding protein required for assembly of the holoenzyme telomerase ribonucleoprotein (RNP) complex. Specifically binds telomerase RNA and promotes its assembly with catalytic subunit p123, thereby stimulating enzymatic activity and processivity of p123. Telomerase is a ribonucleoprotein enzyme essential that copies new telomeric repeats onto chromosome ends and functions to maintain cell division. In Euplotes aediculatus (Ciliate), this protein is La-related protein 7 homolog.